Consider the following 202-residue polypeptide: Imidazoleglycerol-phosphate dehydratase (202 aa).

The protein belongs to the imidazoleglycerol-phosphate dehydratase family.

Its subcellular location is the cytoplasm. It carries out the reaction D-erythro-1-(imidazol-4-yl)glycerol 3-phosphate = 3-(imidazol-4-yl)-2-oxopropyl phosphate + H2O. The protein operates within amino-acid biosynthesis; L-histidine biosynthesis; L-histidine from 5-phospho-alpha-D-ribose 1-diphosphate: step 6/9. The sequence is that of Imidazoleglycerol-phosphate dehydratase from Rhizobium johnstonii (strain DSM 114642 / LMG 32736 / 3841) (Rhizobium leguminosarum bv. viciae).